The chain runs to 335 residues: Methionine import ATP-binding protein MetN 1 (335 aa).

Residues 2-242 (IEFQQVHKTY…PQHPTTKRFV (241 aa)) form the ABC transporter domain. 38–45 (GHSGAGKS) is a binding site for ATP.

It belongs to the ABC transporter superfamily. Methionine importer (TC 3.A.1.24) family. In terms of assembly, the complex is composed of two ATP-binding proteins (MetN), two transmembrane proteins (MetI) and a solute-binding protein (MetQ).

The protein localises to the cell inner membrane. It catalyses the reaction L-methionine(out) + ATP + H2O = L-methionine(in) + ADP + phosphate + H(+). The catalysed reaction is D-methionine(out) + ATP + H2O = D-methionine(in) + ADP + phosphate + H(+). Part of the ABC transporter complex MetNIQ involved in methionine import. Responsible for energy coupling to the transport system. The protein is Methionine import ATP-binding protein MetN 1 of Pseudomonas putida (strain ATCC 47054 / DSM 6125 / CFBP 8728 / NCIMB 11950 / KT2440).